The primary structure comprises 79 residues: Small ribosomal subunit protein bS16c (79 aa).

The protein belongs to the bacterial ribosomal protein bS16 family.

Its subcellular location is the plastid. It is found in the chloroplast. The chain is Small ribosomal subunit protein bS16c from Staurastrum punctulatum (Green alga).